The sequence spans 197 residues: Holliday junction branch migration complex subunit RuvA (197 aa).

Positions 1 to 63 (MFEYLNGKLV…EDAHSLYGFV (63 aa)) are domain I. The segment at 64–142 (NESEKALFLR…ATGAVGISLL (79 aa)) is domain II. The flexible linker stretch occupies residues 142–146 (LDAAP). The domain III stretch occupies residues 147–197 (AGNLALEEAIEALQALGYKATELKKIEKKLEQEAGLTSEEYIKSALKLMMK).

Belongs to the RuvA family. As to quaternary structure, homotetramer. Forms an RuvA(8)-RuvB(12)-Holliday junction (HJ) complex. HJ DNA is sandwiched between 2 RuvA tetramers; dsDNA enters through RuvA and exits via RuvB. An RuvB hexamer assembles on each DNA strand where it exits the tetramer. Each RuvB hexamer is contacted by two RuvA subunits (via domain III) on 2 adjacent RuvB subunits; this complex drives branch migration. In the full resolvosome a probable DNA-RuvA(4)-RuvB(12)-RuvC(2) complex forms which resolves the HJ.

It is found in the cytoplasm. Its function is as follows. The RuvA-RuvB-RuvC complex processes Holliday junction (HJ) DNA during genetic recombination and DNA repair, while the RuvA-RuvB complex plays an important role in the rescue of blocked DNA replication forks via replication fork reversal (RFR). RuvA specifically binds to HJ cruciform DNA, conferring on it an open structure. The RuvB hexamer acts as an ATP-dependent pump, pulling dsDNA into and through the RuvAB complex. HJ branch migration allows RuvC to scan DNA until it finds its consensus sequence, where it cleaves and resolves the cruciform DNA. This chain is Holliday junction branch migration complex subunit RuvA, found in Lactococcus lactis subsp. cremoris (strain SK11).